Reading from the N-terminus, the 486-residue chain is Differentially expressed in FDCP 8 homolog (486 aa).

The interval 1-26 (MSSWCSSEDAHNQSSTPSTRSRKSSW) is disordered. Phorbol-ester/DAG-type zinc fingers lie at residues 160–212 (GHEF…KRVC) and 393–459 (IHTV…SLNC).

It belongs to the DEF8 family.

The chain is Differentially expressed in FDCP 8 homolog from Caenorhabditis elegans.